The primary structure comprises 125 residues: MAISKEDVLEYISNLSVLELSELVKEFEEKFGVSAAPVMVAGGAAAGGAAAAAEEKTEFDIVLTDGGAKKIEVIKIVRALTGLGLKEAKDAVEQTPSTLKEGVAKAEAEEAKKQLEEAGAKVELK.

Belongs to the bacterial ribosomal protein bL12 family. In terms of assembly, homodimer. Part of the ribosomal stalk of the 50S ribosomal subunit. Forms a multimeric L10(L12)X complex, where L10 forms an elongated spine to which 2 to 4 L12 dimers bind in a sequential fashion. Binds GTP-bound translation factors.

In terms of biological role, forms part of the ribosomal stalk which helps the ribosome interact with GTP-bound translation factors. Is thus essential for accurate translation. The chain is Large ribosomal subunit protein bL12 from Campylobacter jejuni subsp. jejuni serotype O:6 (strain 81116 / NCTC 11828).